Here is a 236-residue protein sequence, read N- to C-terminus: Purine nucleoside phosphorylase DeoD-type (236 aa).

H5 contacts a purine D-ribonucleoside. Residues G21, R25, R44, and 88–91 (RVGT) contribute to the phosphate site. A purine D-ribonucleoside contacts are provided by residues 180-182 (EME) and 204-205 (SD). D205 acts as the Proton donor in catalysis.

This sequence belongs to the PNP/UDP phosphorylase family. In terms of assembly, homohexamer; trimer of homodimers.

It catalyses the reaction a purine D-ribonucleoside + phosphate = a purine nucleobase + alpha-D-ribose 1-phosphate. The enzyme catalyses a purine 2'-deoxy-D-ribonucleoside + phosphate = a purine nucleobase + 2-deoxy-alpha-D-ribose 1-phosphate. In terms of biological role, catalyzes the reversible phosphorolytic breakdown of the N-glycosidic bond in the beta-(deoxy)ribonucleoside molecules, with the formation of the corresponding free purine bases and pentose-1-phosphate. This chain is Purine nucleoside phosphorylase DeoD-type, found in Shewanella baltica (strain OS223).